The following is a 262-amino-acid chain: 4-hydroxy-2-oxovalerate aldolase (262 aa).

The active-site Proton acceptor is histidine 48. Glutamine 149 is a substrate binding site. Residue glutamate 151 participates in Mg(2+) binding. Residues alanine 176 and aspartate 177 each contribute to the substrate site. Mg(2+) is bound at residue aspartate 177.

Belongs to the HpcH/HpaI aldolase family.

It carries out the reaction (S)-4-hydroxy-2-oxopentanoate = acetaldehyde + pyruvate. It participates in xenobiotic degradation; biphenyl degradation. Functionally, catalyzes the reversible retro-aldol cleavage of 4-hydroxy-2-oxovalerate to pyruvate and acetaldehyde. This is 4-hydroxy-2-oxovalerate aldolase (bphF) from Novosphingobium aromaticivorans (Sphingomonas aromaticivorans).